A 360-amino-acid chain; its full sequence is DNA integrity scanning protein DisA (360 aa).

One can recognise a DAC domain in the interval 9–147 (DDEIIEVLRM…GSRKYILRET (139 aa)). Residues Gly76, Leu94, and 107–111 (TRHKT) contribute to the ATP site.

The protein belongs to the DisA family. As to quaternary structure, homooctamer. The cofactor is Mg(2+).

The catalysed reaction is 2 ATP = 3',3'-c-di-AMP + 2 diphosphate. Functionally, participates in a DNA-damage check-point that is active prior to asymmetric division when DNA is damaged. DisA forms globular foci that rapidly scan along the chromosomes during sporulation, searching for lesions. When a lesion is present, DisA pauses at the lesion site. This triggers a cellular response that culminates in a temporary block in sporulation initiation. Also has diadenylate cyclase activity, catalyzing the condensation of 2 ATP molecules into cyclic di-AMP (c-di-AMP). c-di-AMP acts as a signaling molecule that couples DNA integrity with progression of sporulation. The rise in c-di-AMP level generated by DisA while scanning the chromosome, operates as a positive signal that advances sporulation; upon encountering a lesion, the DisA focus arrests at the damaged site and halts c-di-AMP synthesis. This is DNA integrity scanning protein DisA from Acetivibrio thermocellus (strain ATCC 27405 / DSM 1237 / JCM 9322 / NBRC 103400 / NCIMB 10682 / NRRL B-4536 / VPI 7372) (Clostridium thermocellum).